The chain runs to 106 residues: Putative double-stranded DNA mimic protein VV1_3059 (106 aa).

Belongs to the putative dsDNA mimic protein family.

Functionally, may act as a double-stranded DNA (dsDNA) mimic. Probably regulates the activity of a dsDNA-binding protein. This chain is Putative double-stranded DNA mimic protein VV1_3059, found in Vibrio vulnificus (strain CMCP6).